We begin with the raw amino-acid sequence, 111 residues long: MGSSSFLVLMVSLALVTLVVVEGVKGGIEKAGVCPADNVRCFKSNPPQCHTDQDCLGERKCCYLHCGFKCVIPVKKLEEGGNKDEDVSGPHPEPGWEAKSPGSSSTGCPQI.

The signal sequence occupies residues 1 to 23 (MGSSSFLVLMVSLALVTLVVVEG). Residues 27–74 (GIEKAGVCPADNVRCFKSNPPQCHTDQDCLGERKCCYLHCGFKCVIPV) form the WAP domain. Intrachain disulfides connect C34/C62, C41/C66, C49/C61, and C55/C70. The tract at residues 80–111 (GGNKDEDVSGPHPEPGWEAKSPGSSSTGCPQI) is disordered. A compositionally biased stretch (polar residues) spans 101 to 111 (PGSSSTGCPQI).

It is found in the secreted. Functionally, antibacterial protein. Putative acid-stable proteinase inhibitor. This Colobus guereza (Mantled guereza) protein is WAP four-disulfide core domain protein 12 (WFDC12).